Reading from the N-terminus, the 292-residue chain is NAD kinase (292 aa).

Asp-73 acts as the Proton acceptor in catalysis. NAD(+)-binding positions include 73–74, 147–148, His-158, Arg-175, Asp-177, 188–193, and Gln-247; these read DG, NE, and TAYSLS.

It belongs to the NAD kinase family. Requires a divalent metal cation as cofactor.

The protein resides in the cytoplasm. The enzyme catalyses NAD(+) + ATP = ADP + NADP(+) + H(+). Its function is as follows. Involved in the regulation of the intracellular balance of NAD and NADP, and is a key enzyme in the biosynthesis of NADP. Catalyzes specifically the phosphorylation on 2'-hydroxyl of the adenosine moiety of NAD to yield NADP. The polypeptide is NAD kinase (Photorhabdus laumondii subsp. laumondii (strain DSM 15139 / CIP 105565 / TT01) (Photorhabdus luminescens subsp. laumondii)).